A 371-amino-acid polypeptide reads, in one-letter code: Ribosomal RNA small subunit methyltransferase H (371 aa).

S-adenosyl-L-methionine-binding positions include 43–45 (GGH), Asp-62, Leu-96, Asp-110, and Gln-117. The disordered stretch occupies residues 315 to 371 (AAERLDPTQQQRQRTDRERYRRQVRAMHQPGTGSAVRRPVSGDDGTGTDEEGEGHDD). The segment covering 360-371 (TGTDEEGEGHDD) has biased composition (acidic residues).

Belongs to the methyltransferase superfamily. RsmH family.

It localises to the cytoplasm. It carries out the reaction cytidine(1402) in 16S rRNA + S-adenosyl-L-methionine = N(4)-methylcytidine(1402) in 16S rRNA + S-adenosyl-L-homocysteine + H(+). In terms of biological role, specifically methylates the N4 position of cytidine in position 1402 (C1402) of 16S rRNA. The chain is Ribosomal RNA small subunit methyltransferase H from Salinispora tropica (strain ATCC BAA-916 / DSM 44818 / JCM 13857 / NBRC 105044 / CNB-440).